The sequence spans 153 residues: Transcriptional repressor NrdR (153 aa).

The segment at 3 to 34 is a zinc-finger region; sequence CPFCHNQDTRVIDSRAAEEGTAIRRRRSCPAC. In terms of domain architecture, ATP-cone spans 46 to 136; it reads LMVTKRSGAT…VYRSFESLED (91 aa).

This sequence belongs to the NrdR family. It depends on Zn(2+) as a cofactor.

Functionally, negatively regulates transcription of bacterial ribonucleotide reductase nrd genes and operons by binding to NrdR-boxes. In Thermobifida fusca (strain YX), this protein is Transcriptional repressor NrdR.